The sequence spans 134 residues: Phosphomevalonate dehydratase small subunit (134 aa).

S62 acts as the Proton acceptor in catalysis.

The protein belongs to the AcnX type II small subunit family. Heterodimer composed of a large subunit (PMDh-L) and a small subunit (PMDh-S).

It carries out the reaction (R)-5-phosphomevalonate = (2E)-3-methyl-5-phosphooxypent-2-enoate + H2O. It participates in isoprenoid biosynthesis; isopentenyl diphosphate biosynthesis via mevalonate pathway. In terms of biological role, component of a hydro-lyase that catalyzes the dehydration of mevalonate 5-phosphate (MVA5P) to form trans-anhydromevalonate 5-phosphate (tAHMP). Involved in the archaeal mevalonate (MVA) pathway, which provides fundamental precursors for isoprenoid biosynthesis, such as isopentenyl diphosphate (IPP) and dimethylallyl diphosphate (DMAPP). The sequence is that of Phosphomevalonate dehydratase small subunit from Pyrococcus horikoshii (strain ATCC 700860 / DSM 12428 / JCM 9974 / NBRC 100139 / OT-3).